The primary structure comprises 419 residues: Multiple organellar RNA editing factor 1, mitochondrial (419 aa).

Residues Met1–Leu60 constitute a mitochondrion transit peptide. The interval Lys174–Arg401 is disordered. Residues Gly237–Gln252 are compositionally biased toward low complexity. A compositionally biased stretch (gly residues) spans Gly310–Gln327. The segment covering Gly342 to Ala356 has biased composition (low complexity). Residues Gly357–Gly367 are compositionally biased toward gly residues. Positions Glu371 to Arg401 are enriched in polar residues.

This sequence belongs to the MORF family. As to quaternary structure, homodimer and heterodimer with MORF3. Heterodimers with MORF8/RIP1, MORF4/RIP4 and MORF6/RIP6. Interacts with PCMP-E90/MEF13. Interacts with PCMP-H13/MEF35.

The protein resides in the mitochondrion. Its function is as follows. Involved in organellar RNA editing. Required for the processing of numerous RNA editing sites in mitochondria. Binds to the mitochondrial MEF19 and MEF21 factors, two pentatricopeptide repeat-containing proteins involved in RNA editing. The protein is Multiple organellar RNA editing factor 1, mitochondrial of Arabidopsis thaliana (Mouse-ear cress).